The following is a 431-amino-acid chain: Serine hydroxymethyltransferase 2 (431 aa).

Residues leucine 131 and 135–137 (GHL) contribute to the (6S)-5,6,7,8-tetrahydrofolate site. Lysine 240 carries the post-translational modification N6-(pyridoxal phosphate)lysine. A (6S)-5,6,7,8-tetrahydrofolate-binding site is contributed by glutamate 256.

It belongs to the SHMT family. Homodimer. Requires pyridoxal 5'-phosphate as cofactor.

The protein localises to the cytoplasm. The catalysed reaction is (6R)-5,10-methylene-5,6,7,8-tetrahydrofolate + glycine + H2O = (6S)-5,6,7,8-tetrahydrofolate + L-serine. It participates in one-carbon metabolism; tetrahydrofolate interconversion. It functions in the pathway amino-acid biosynthesis; glycine biosynthesis; glycine from L-serine: step 1/1. Its function is as follows. Catalyzes the reversible interconversion of serine and glycine with tetrahydrofolate (THF) serving as the one-carbon carrier. This reaction serves as the major source of one-carbon groups required for the biosynthesis of purines, thymidylate, methionine, and other important biomolecules. Also exhibits THF-independent aldolase activity toward beta-hydroxyamino acids, producing glycine and aldehydes, via a retro-aldol mechanism. The sequence is that of Serine hydroxymethyltransferase 2 from Vibrio vulnificus (strain CMCP6).